The following is a 93-amino-acid chain: Alpha-defensin 3 (93 aa).

An N-terminal signal peptide occupies residues 1–16 (MKTLVLLSALVLLAFQ). The propeptide occupies 17–58 (VQADPIQNTDEETKTEEQPGEDDQAVSVSFGDPEGSSLQEES). Residues 22–56 (IQNTDEETKTEEQPGEDDQAVSVSFGDPEGSSLQE) form a disordered region. Disulfide bonds link cysteine 64-cysteine 92, cysteine 66-cysteine 81, and cysteine 71-cysteine 91.

Belongs to the alpha-defensin family. As to expression, paneth cells of the small bowel.

The protein resides in the secreted. Probably contributes to the antimicrobial barrier function of the small bowel mucosa. In Mus musculus (Mouse), this protein is Alpha-defensin 3 (Defa3).